The following is a 228-amino-acid chain: Urease accessory protein UreF (228 aa).

Belongs to the UreF family. As to quaternary structure, ureD, UreF and UreG form a complex that acts as a GTP-hydrolysis-dependent molecular chaperone, activating the urease apoprotein by helping to assemble the nickel containing metallocenter of UreC. The UreE protein probably delivers the nickel.

It is found in the cytoplasm. Its function is as follows. Required for maturation of urease via the functional incorporation of the urease nickel metallocenter. In Yersinia pseudotuberculosis serotype IB (strain PB1/+), this protein is Urease accessory protein UreF.